The primary structure comprises 179 residues: Acireductone dioxygenase (179 aa).

Positions 85, 87, 91, and 132 each coordinate Fe(2+). His85, His87, Glu91, and His132 together coordinate Ni(2+).

It belongs to the acireductone dioxygenase (ARD) family. The cofactor is Fe(2+). Ni(2+) serves as cofactor.

It is found in the cytoplasm. The protein localises to the nucleus. The catalysed reaction is 1,2-dihydroxy-5-(methylsulfanyl)pent-1-en-3-one + O2 = 4-methylsulfanyl-2-oxobutanoate + formate + 2 H(+). It catalyses the reaction 1,2-dihydroxy-5-(methylsulfanyl)pent-1-en-3-one + O2 = 3-(methylsulfanyl)propanoate + CO + formate + 2 H(+). It participates in amino-acid biosynthesis; L-methionine biosynthesis via salvage pathway; L-methionine from S-methyl-5-thio-alpha-D-ribose 1-phosphate: step 5/6. Its function is as follows. Catalyzes 2 different reactions between oxygen and the acireductone 1,2-dihydroxy-3-keto-5-methylthiopentene (DHK-MTPene) depending upon the metal bound in the active site. Fe-containing acireductone dioxygenase (Fe-ARD) produces formate and 2-keto-4-methylthiobutyrate (KMTB), the alpha-ketoacid precursor of methionine in the methionine recycle pathway. Ni-containing acireductone dioxygenase (Ni-ARD) produces methylthiopropionate, carbon monoxide and formate, and does not lie on the methionine recycle pathway. The protein is Acireductone dioxygenase of Saccharomyces cerevisiae (strain ATCC 204508 / S288c) (Baker's yeast).